A 165-amino-acid chain; its full sequence is V-type proton ATPase 16 kDa proteolipid subunit (165 aa).

Residues Met1–Thr10 are Lumenal-facing. The chain crosses the membrane as a helical span at residues Ala11 to Gly33. At Thr34–Ser55 the chain is on the cytoplasmic side. The helical transmembrane segment at Ile56–Ile76 threads the bilayer. The Lumenal portion of the chain corresponds to Ser77 to His95. A helical transmembrane segment spans residues Leu96 to Gly117. At Asp118–Lys129 the chain is on the cytoplasmic side. Residues Leu130–Leu155 form a helical membrane-spanning segment. At Ser156 to Glu165 the chain is on the lumenal side.

This sequence belongs to the V-ATPase proteolipid subunit family. V-ATPase is a heteromultimeric enzyme composed of a peripheral catalytic V1 complex (main components: subunits A, B, C, D, E, and F) attached to an integral membrane V0 proton pore complex (main component: the proteolipid protein; which is present as a hexamer that forms the proton-conducting pore).

Its subcellular location is the vacuole membrane. Its function is as follows. Proton-conducting pore forming subunit of the membrane integral V0 complex of vacuolar ATPase. V-ATPase is responsible for acidifying a variety of intracellular compartments in eukaryotic cells. In Nicotiana tabacum (Common tobacco), this protein is V-type proton ATPase 16 kDa proteolipid subunit.